The sequence spans 72 residues: Mitochondrial import receptor subunit TOM7-1 (72 aa).

The Cytoplasmic segment spans residues L2–K41. A helical transmembrane segment spans residues V42–S59. Residues E60–V72 lie on the Mitochondrial intermembrane side of the membrane.

It belongs to the Tom7 family. In terms of assembly, forms part of the preprotein translocase complex of the outer mitochondrial membrane (TOM complex).

The protein resides in the mitochondrion outer membrane. In terms of biological role, seems to act as a modulator of the dynamics of the mitochondrial protein transport machinery. Seems to promote the dissociation of subunits of the outer membrane translocase. This is Mitochondrial import receptor subunit TOM7-1 (TOM7-1) from Solanum tuberosum (Potato).